The following is a 355-amino-acid chain: WAT1-related protein At3g28130 (355 aa).

A run of 10 helical transmembrane segments spans residues 11–31 (AVLL…NTLF), 42–62 (YTFL…SHIF), 80–100 (IGVL…GIEY), 104–124 (TLAS…AIIF), 136–156 (SVAK…VVLY), 186–206 (WIIG…AFIL), 218–238 (FTVS…IGIV), 244–264 (PSIW…GGIF), 290–310 (LSIL…FYLG), and 311–331 (SLVG…GKAK). The region spanning 29 to 154 (TLFKAATSKG…VSLVGALVVV (126 aa)) is the EamA domain.

It belongs to the drug/metabolite transporter (DMT) superfamily. Plant drug/metabolite exporter (P-DME) (TC 2.A.7.4) family.

It is found in the membrane. This chain is WAT1-related protein At3g28130, found in Arabidopsis thaliana (Mouse-ear cress).